The following is a 302-amino-acid chain: Glutaminase (302 aa).

Positions 61, 111, 155, 162, 186, 238, and 256 each coordinate substrate.

It belongs to the glutaminase family. As to quaternary structure, homotetramer.

The enzyme catalyses L-glutamine + H2O = L-glutamate + NH4(+). This is Glutaminase from Pseudomonas aeruginosa (strain ATCC 15692 / DSM 22644 / CIP 104116 / JCM 14847 / LMG 12228 / 1C / PRS 101 / PAO1).